The primary structure comprises 213 residues: ATP synthase peripheral stalk subunit OSCP, mitochondrial (213 aa).

The N-terminal 23 residues, 1–23 (MAAPATSVLSRQVRSFSTSVVRP), are a transit peptide targeting the mitochondrion. Residues 5–23 (ATSVLSRQVRSFSTSVVRP) carry the SIFI-degron motif. N6-acetyllysine occurs at positions 60, 70, and 73. Lysine 90 carries the post-translational modification N6-succinyllysine. An N6-acetyllysine; alternate mark is found at lysine 100 and lysine 158. N6-succinyllysine; alternate occurs at positions 100 and 158. Residues lysine 176 and lysine 192 each carry the N6-acetyllysine modification. Position 199 is an N6-succinyllysine (lysine 199).

The protein belongs to the ATPase delta chain family. As to quaternary structure, component of the ATP synthase complex composed at least of ATP5F1A/subunit alpha, ATP5F1B/subunit beta, ATP5MC1/subunit c (homooctomer), MT-ATP6/subunit a, MT-ATP8/subunit 8, ATP5ME/subunit e, ATP5MF/subunit f, ATP5MG/subunit g, ATP5MK/subunit k, ATP5MJ/subunit j, ATP5F1C/subunit gamma, ATP5F1D/subunit delta, ATP5F1E/subunit epsilon, ATP5PF/subunit F6, ATP5PB/subunit b, ATP5PD/subunit d, ATP5PO/subunit OSCP. ATP synthase complex consists of a soluble F(1) head domain (subunits alpha(3) and beta(3)) - the catalytic core - and a membrane F(0) domain - the membrane proton channel (subunits c, a, 8, e, f, g, k and j). These two domains are linked by a central stalk (subunits gamma, delta, and epsilon) rotating inside the F1 region and a stationary peripheral stalk (subunits F6, b, d, and OSCP). In response to mitochondrial stress, the precursor protein is ubiquitinated by the SIFI complex in the cytoplasm before mitochondrial import, leading to its degradation. Within the SIFI complex, UBR4 initiates ubiquitin chain that are further elongated or branched by KCMF1. In terms of tissue distribution, expressed by the principal cells of the epididymis. Detected in flagella of epididymal sperm (at protein level).

The protein localises to the mitochondrion. It localises to the mitochondrion inner membrane. Its function is as follows. Subunit OSCP, of the mitochondrial membrane ATP synthase complex (F(1)F(0) ATP synthase or Complex V) that produces ATP from ADP in the presence of a proton gradient across the membrane which is generated by electron transport complexes of the respiratory chain. ATP synthase complex consist of a soluble F(1) head domain - the catalytic core - and a membrane F(1) domain - the membrane proton channel. These two domains are linked by a central stalk rotating inside the F(1) region and a stationary peripheral stalk. During catalysis, ATP synthesis in the catalytic domain of F(1) is coupled via a rotary mechanism of the central stalk subunits to proton translocation. In vivo, can only synthesize ATP although its ATP hydrolase activity can be activated artificially in vitro. Part of the complex F(0) domain. Part of the complex F(0) domain and the peripheric stalk, which acts as a stator to hold the catalytic alpha(3)beta(3) subcomplex and subunit a/ATP6 static relative to the rotary elements. This chain is ATP synthase peripheral stalk subunit OSCP, mitochondrial, found in Rattus norvegicus (Rat).